Here is a 101-residue protein sequence, read N- to C-terminus: Replication restart protein PriB (101 aa).

The SSB domain occupies 1 to 101; the sequence is MTTNNLVLSG…IHAENVELKT (101 aa).

This sequence belongs to the PriB family. Homodimer. Interacts with PriA and DnaT. Component of the replication restart primosome. Primosome assembly occurs via a 'hand-off' mechanism. PriA binds to replication forks, subsequently PriB then DnaT bind; DnaT then displaces ssDNA to generate the helicase loading substrate.

Its function is as follows. Involved in the restart of stalled replication forks, which reloads the replicative helicase on sites other than the origin of replication; the PriA-PriB pathway is the major replication restart pathway. During primosome assembly it facilitates complex formation between PriA and DnaT on DNA; stabilizes PriA on DNA. Stimulates the DNA unwinding activity of PriA helicase. The chain is Replication restart protein PriB from Shewanella oneidensis (strain ATCC 700550 / JCM 31522 / CIP 106686 / LMG 19005 / NCIMB 14063 / MR-1).